Here is a 284-residue protein sequence, read N- to C-terminus: L-ribulose-5-phosphate 3-epimerase UlaE (284 aa).

It belongs to the L-ribulose-5-phosphate 3-epimerase family.

It catalyses the reaction L-ribulose 5-phosphate = L-xylulose 5-phosphate. It participates in cofactor degradation; L-ascorbate degradation; D-xylulose 5-phosphate from L-ascorbate: step 3/4. In terms of biological role, catalyzes the isomerization of L-xylulose-5-phosphate to L-ribulose-5-phosphate. Is involved in the anaerobic L-ascorbate utilization. This Shigella boydii serotype 18 (strain CDC 3083-94 / BS512) protein is L-ribulose-5-phosphate 3-epimerase UlaE.